The following is a 22-amino-acid chain: Cysteine-rich venom protein notescatin (22 aa).

Positions Ser1–Asn15 are enriched in basic and acidic residues. The interval Ser1–Lys22 is disordered.

This sequence belongs to the CRISP family. In terms of processing, contains 8 disulfide bonds. As to expression, expressed by the venom gland.

The protein localises to the secreted. The chain is Cysteine-rich venom protein notescatin from Notechis scutatus scutatus (Mainland tiger snake).